The chain runs to 316 residues: Aspartate-semialdehyde dehydrogenase (316 aa).

Residues 13–16 (TGAV) and 41–42 (RS) contribute to the NADP(+) site. Arginine 101 is a phosphate binding site. Cysteine 132 acts as the Acyl-thioester intermediate in catalysis. Residue glutamine 159 coordinates substrate. Residue 162–163 (SG) coordinates NADP(+). Lysine 216 provides a ligand contact to phosphate. Arginine 238 is a substrate binding site. The Proton acceptor role is filled by histidine 245. Asparagine 316 lines the NADP(+) pocket.

This sequence belongs to the aspartate-semialdehyde dehydrogenase family. In terms of assembly, homodimer.

It catalyses the reaction L-aspartate 4-semialdehyde + phosphate + NADP(+) = 4-phospho-L-aspartate + NADPH + H(+). It functions in the pathway amino-acid biosynthesis; L-lysine biosynthesis via DAP pathway; (S)-tetrahydrodipicolinate from L-aspartate: step 2/4. It participates in amino-acid biosynthesis; L-methionine biosynthesis via de novo pathway; L-homoserine from L-aspartate: step 2/3. The protein operates within amino-acid biosynthesis; L-threonine biosynthesis; L-threonine from L-aspartate: step 2/5. Catalyzes the NADPH-dependent formation of L-aspartate-semialdehyde (L-ASA) by the reductive dephosphorylation of L-aspartyl-4-phosphate. This Vibrio mimicus protein is Aspartate-semialdehyde dehydrogenase (asd).